A 225-amino-acid polypeptide reads, in one-letter code: UPF0758 protein SEQ_1136 (225 aa).

Residues 102–224 form the MPN domain; sequence PVLSSAQVAE…YYSFREKSDL (123 aa). 3 residues coordinate Zn(2+): H173, H175, and D186. The JAMM motif signature appears at 173-186; sequence HNHPSGLTKPSAND.

It belongs to the UPF0758 family.

This chain is UPF0758 protein SEQ_1136, found in Streptococcus equi subsp. equi (strain 4047).